The following is a 134-amino-acid chain: Protein dpy-30 homolog (134 aa).

Residues 1-81 are disordered; the sequence is MEAKTDAPIS…ETNNMPTRQY (81 aa). Low complexity predominate over residues 31-68; the sequence is AQANPTAAPGAPPSGAIAVGQSTNPVAQQQQQPAVAKK. A compositionally biased stretch (polar residues) spans 71–81; it reads SETNNMPTRQY.

It belongs to the dpy-30 family. As to quaternary structure, core component of several methyltransferase-containing complexes. Component of the SET1 complex, composed at least of the catalytic subunit Set1, wds/WDR5, Wdr82, Rbbp5, ash2, Cfp1/CXXC1, hcf and Dpy-30L1. Component of the MLL3/4 complex composed at least of the catalytic subunit trr, ash2, Rbbp5, Dpy-30L1, wds, hcf, ptip, Pa1, Utx, Lpt and Ncoa6. Expressed in larval brain, gonad, imaginal disk and salivary gland and in adult brain, testis, ovary and salivary gland.

The protein localises to the nucleus. In terms of biological role, component of the SET1 complex that specifically di- and trimethylates 'Lys-4' of histone H3 and of the MLL3/4 complex which also methylates histone H3 'Lys-4'. Inhibits MTF-1 transcription factor activity. In Drosophila melanogaster (Fruit fly), this protein is Protein dpy-30 homolog.